A 448-amino-acid polypeptide reads, in one-letter code: N-succinylarginine dihydrolase (448 aa).

Substrate-binding positions include 19–28 (GGLSYGNVAS), N110, and 137–138 (HR). Residue E174 is part of the active site. R214 is a binding site for substrate. The active site involves H250. D252 and N365 together coordinate substrate. C371 functions as the Nucleophile in the catalytic mechanism.

It belongs to the succinylarginine dihydrolase family. Homodimer.

It catalyses the reaction N(2)-succinyl-L-arginine + 2 H2O + 2 H(+) = N(2)-succinyl-L-ornithine + 2 NH4(+) + CO2. Its pathway is amino-acid degradation; L-arginine degradation via AST pathway; L-glutamate and succinate from L-arginine: step 2/5. Functionally, catalyzes the hydrolysis of N(2)-succinylarginine into N(2)-succinylornithine, ammonia and CO(2). This chain is N-succinylarginine dihydrolase, found in Pseudomonas syringae pv. syringae (strain B728a).